Here is a 287-residue protein sequence, read N- to C-terminus: Phycobilisome 32.1 kDa linker polypeptide, phycocyanin-associated, rod (287 aa).

In terms of domain architecture, PBS-linker spans 2-180 (AITAAASRLG…LYRGYANSDR (179 aa)). Residues 235-287 (GRVYRIEVAGIRQPGYPGVRRSSTAFLVPYEQLSAKMQQLQRTGARIISVNPA) enclose the CpcD-like domain.

This sequence belongs to the phycobilisome linker protein family.

The protein localises to the cellular thylakoid membrane. Rod linker protein, associated with phycocyanin. Linker polypeptides determine the state of aggregation and the location of the disk-shaped phycobiliprotein units within the phycobilisome and modulate their spectroscopic properties in order to mediate a directed and optimal energy transfer. This is Phycobilisome 32.1 kDa linker polypeptide, phycocyanin-associated, rod (cpcC) from Thermosynechococcus vestitus (strain NIES-2133 / IAM M-273 / BP-1).